Reading from the N-terminus, the 138-residue chain is Probable DNA-directed RNA polymerases I, II, and III subunit RPABC2 (138 aa).

Acidic residues-rich tracts occupy residues 1 to 27 and 35 to 46; these read MADD…VIEE and EEEDDDNNVDEN. Residues 1–46 are disordered; it reads MADDDDYQDMDNDDFVDDNEMEDVIEEEQQRPDHEEEDDDNNVDEN.

This sequence belongs to the archaeal Rpo6/eukaryotic RPB6 RNA polymerase subunit family. As to quaternary structure, component of the RNA polymerase I (Pol I), RNA polymerase II (Pol II) and RNA polymerase III (Pol III) complexes consisting of at least 13, 12 and 17 subunits, respectively.

The protein localises to the nucleus. DNA-dependent RNA polymerases catalyze the transcription of DNA into RNA using the four ribonucleoside triphosphates as substrates. Common component of RNA polymerases I, II and III which synthesize ribosomal RNA precursors, mRNA precursors and many functional non-coding RNAs, and small RNAs, such as 5S rRNA and tRNAs, respectively. Pol II is the central component of the basal RNA polymerase II transcription machinery. Pols are composed of mobile elements that move relative to each other. In Pol II, RPB6 is part of the clamp element and together with parts of RPB1 and RPB2 forms a pocket to which the RPB4-RPB7 subcomplex binds. This chain is Probable DNA-directed RNA polymerases I, II, and III subunit RPABC2, found in Caenorhabditis briggsae.